A 75-amino-acid polypeptide reads, in one-letter code: Protein Tlp homolog (75 aa).

Positions 53-75 (REALDGMREEIKDEARDKKNGYM) are disordered.

Belongs to the Tlp family.

This Clostridium botulinum (strain ATCC 19397 / Type A) protein is Protein Tlp homolog.